Reading from the N-terminus, the 292-residue chain is Homoserine kinase (292 aa).

84 to 94 is an ATP binding site; sequence PLSRGLGSSSA.

Belongs to the GHMP kinase family. Homoserine kinase subfamily.

The protein localises to the cytoplasm. The catalysed reaction is L-homoserine + ATP = O-phospho-L-homoserine + ADP + H(+). The protein operates within amino-acid biosynthesis; L-threonine biosynthesis; L-threonine from L-aspartate: step 4/5. Catalyzes the ATP-dependent phosphorylation of L-homoserine to L-homoserine phosphate. The polypeptide is Homoserine kinase (Campylobacter jejuni subsp. jejuni serotype O:2 (strain ATCC 700819 / NCTC 11168)).